Consider the following 334-residue polypeptide: snRNA-activating protein complex subunit 2 (334 aa).

Disordered stretches follow at residues 137 to 200 (LHSK…STEE) and 271 to 306 (AGGS…ELKS). Low complexity predominate over residues 167-180 (IPSSAPAAPSSAPR).

In terms of assembly, part of the SNAPc complex composed of 5 subunits: SNAPC1, SNAPC2, SNAPC3, SNAPC4 and SNAPC5. SNAPC2 interacts with TBP and SNAPC4.

The protein localises to the nucleus. Its function is as follows. Part of the SNAPc complex required for the transcription of both RNA polymerase II and III small-nuclear RNA genes. Binds to the proximal sequence element (PSE), a non-TATA-box basal promoter element common to these 2 types of genes. Recruits TBP and BRF2 to the U6 snRNA TATA box. This Homo sapiens (Human) protein is snRNA-activating protein complex subunit 2 (SNAPC2).